A 452-amino-acid polypeptide reads, in one-letter code: Pup--protein ligase (452 aa).

Glutamate 9 is a Mg(2+) binding site. Arginine 53 contributes to the ATP binding site. Tyrosine 55 lines the Mg(2+) pocket. Residue aspartate 57 is the Proton acceptor of the active site. Glutamate 63 serves as a coordination point for Mg(2+). ATP is bound by residues threonine 66 and tryptophan 419.

This sequence belongs to the Pup ligase/Pup deamidase family. Pup-conjugating enzyme subfamily.

It catalyses the reaction ATP + [prokaryotic ubiquitin-like protein]-L-glutamate + [protein]-L-lysine = ADP + phosphate + N(6)-([prokaryotic ubiquitin-like protein]-gamma-L-glutamyl)-[protein]-L-lysine.. It functions in the pathway protein degradation; proteasomal Pup-dependent pathway. It participates in protein modification; protein pupylation. In terms of biological role, catalyzes the covalent attachment of the prokaryotic ubiquitin-like protein modifier Pup to the proteasomal substrate proteins, thereby targeting them for proteasomal degradation. This tagging system is termed pupylation. The ligation reaction involves the side-chain carboxylate of the C-terminal glutamate of Pup and the side-chain amino group of a substrate lysine. The chain is Pup--protein ligase from Salinispora arenicola (strain CNS-205).